The primary structure comprises 816 residues: MLPYVIATLGSAGSTCKASTCSNSTKDYCYSARIRSTVLQGLPFGGVPTVLALDFMCFLALLFVFSILRKVAWDYGRLALVTDADSIASALHSDNHDRYERLTSVSSSVDFDQRDNGFCSWLTAIFRIKDDEIRDKCGGDAVHYLSFQRHIIGLLVAVGVLSVGIVLPVNFSGDLLENNAYSFGRTTIANLNSGNNLLWLHTSFAFLYLLLTVYSMRRHTSKMRYKEDDLVKRTLFINGISKYAEPEKIKKHFEEAYANCTVLEARPCYDVARLMFLDAERRKAERGRIYFTNLQSKENTPSMINPKPCGHLCCCVIRGCEEVEAIEYYTKLEEKLKDDYKREKEKVNEKPLGMAFVTFHNETITAIILKDFNACKCQGCACRGEPRASSCSESLHVSNWTVSYAPDPQNIYWEHLSIRGFIWWIRCLVINVVLFILLFFLTTPAIIITTMDKFNVTKPVEYLNNPIITQFFPTLLLWCFSALLPTIVYYSAFFEAHWTRSGENRTTMHKCYTFLIFMVLLLPSLGLSSLDVFFRWLFDKKFLAEAAVRFECVFLPDNGAFFVNYVIASAFIGNAMDLLRIPGLLMYMIRLCLARSAAERRNVKRHQAYEFQFGAAYAWMMCVFTVVMTYSITCPIIVPFGLMYMLLKHLVDRYNLYYAYLPAKLDKKIHSGAVNQVVAAPILCLFWLLFFSTMRTGFLAPTSMFTFVVLVITIVICLCHVCFGHFKYLSAHNYKIEHTEVDTTESRQNGRPATNLPAPKSAKYIAQVLQDSSPEGEATESEEQGSQDEELITTDGMNDTDFQSCEDSLIENEIRQ.

The Extracellular segment spans residues 1-46 (MLPYVIATLGSAGSTCKASTCSNSTKDYCYSARIRSTVLQGLPFGG). Residues 47-71 (VPTVLALDFMCFLALLFVFSILRKV) traverse the membrane as a helical segment. 2 S-palmitoyl cysteine lipidation sites follow: C57 and C119. Over 72–138 (AWDYGRLALV…KDDEIRDKCG (67 aa)) the chain is Cytoplasmic. A helical transmembrane segment spans residues 139-171 (GDAVHYLSFQRHIIGLLVAVGVLSVGIVLPVNF). The Extracellular segment spans residues 172-195 (SGDLLENNAYSFGRTTIANLNSGN). A helical membrane pass occupies residues 196-220 (NLLWLHTSFAFLYLLLTVYSMRRHT). Over 221 to 420 (SKMRYKEDDL…IYWEHLSIRG (200 aa)) the chain is Cytoplasmic. The intracellular linker IL2; confers mechanosensitivity stretch occupies residues 224 to 419 (RYKEDDLVKR…NIYWEHLSIR (196 aa)). S-palmitoyl cysteine attachment occurs at residues C375 and C391. The helical transmembrane segment at 421-450 (FIWWIRCLVINVVLFILLFFLTTPAIIITT) threads the bilayer. The Extracellular portion of the chain corresponds to 451-465 (MDKFNVTKPVEYLNN). Residues 466–495 (PIITQFFPTLLLWCFSALLPTIVYYSAFFE) traverse the membrane as a helical segment. Residues 496 to 499 (AHWT) are Cytoplasmic-facing. The chain crosses the membrane as a helical span at residues 500-536 (RSGENRTTMHKCYTFLIFMVLLLPSLGLSSLDVFFRW). At 537–559 (LFDKKFLAEAAVRFECVFLPDNG) the chain is on the extracellular side. The helical transmembrane segment at 560 to 592 (AFFVNYVIASAFIGNAMDLLRIPGLLMYMIRLC) threads the bilayer. The gating helix stretch occupies residues 560–592 (AFFVNYVIASAFIGNAMDLLRIPGLLMYMIRLC). At 593 to 612 (LARSAAERRNVKRHQAYEFQ) the chain is on the cytoplasmic side. The helical transmembrane segment at 613-631 (FGAAYAWMMCVFTVVMTYS) threads the bilayer. Over 632–634 (ITC) the chain is Extracellular. The helical transmembrane segment at 635 to 659 (PIIVPFGLMYMLLKHLVDRYNLYYA) threads the bilayer. Residues 660 to 666 (YLPAKLD) are Cytoplasmic-facing. A helical transmembrane segment spans residues 667 to 695 (KKIHSGAVNQVVAAPILCLFWLLFFSTMR). The Extracellular portion of the chain corresponds to 696 to 700 (TGFLA). The helical transmembrane segment at 701–721 (PTSMFTFVVLVITIVICLCHV) threads the bilayer. S-palmitoyl cysteine attachment occurs at residues C719 and C722. Residues 722 to 816 (CFGHFKYLSA…DSLIENEIRQ (95 aa)) are Cytoplasmic-facing.

This sequence belongs to the CSC1 (TC 1.A.17) family. As to quaternary structure, monomer. Palmitoylation is required for localization to the plasma membrane and stability.

It is found in the cell membrane. It localises to the lysosome membrane. The protein resides in the early endosome membrane. The enzyme catalyses Ca(2+)(in) = Ca(2+)(out). It carries out the reaction Mg(2+)(in) = Mg(2+)(out). The catalysed reaction is K(+)(in) = K(+)(out). It catalyses the reaction Na(+)(in) = Na(+)(out). The enzyme catalyses Cs(+)(in) = Cs(+)(out). Its function is as follows. Mechanosensitive cation channel with low conductance and high activation threshold. Osmosensitive cation channel preferentially activated by hypotonic stress. Also acts as a phospholipid scramblase in response to changes in membrane structure: upon changes in membrane curvature and thickness, alters its conformation and translocates phospholipids, thereby controlling plasma membrane lipid distribution. This is Mechanosensitive cation channel TMEM63B from Gallus gallus (Chicken).